We begin with the raw amino-acid sequence, 857 residues long: Mitogen-activated protein kinase kinase kinase dlk-1 (857 aa).

A Protein kinase domain is found at 62–304 (ISNLEWLGSG…FSHIRQHWEI (243 aa)). Residues 68–76 (LGSGSQGAV) and Lys89 contribute to the ATP site. The active-site Proton acceptor is Asp173. Disordered regions lie at residues 441-503 (EEMS…ISRN), 572-625 (RIAS…PSRN), 733-775 (NAND…MESE), and 818-857 (HSIKTHRRTSSNPQAIIHQRIEEYSSSATEDSDDAGAVRI). Over residues 467 to 488 (SSGAQSSPFSRQSSCRSSAGQQ) the composition is skewed to low complexity. Residues 609-623 (APRSSSKLNRSSYPS) are compositionally biased toward polar residues. Positions 753 to 762 (ADVESSEDEG) are enriched in acidic residues. Polar residues predominate over residues 763 to 772 (NGNNILNTSM).

The protein belongs to the protein kinase superfamily. STE Ser/Thr protein kinase family. MAP kinase kinase kinase subfamily. Mg(2+) serves as cofactor. Post-translationally, ubiquitinated by rpm-1. Negatively regulated by ubiquitination by fsn-1 bound rpm-1, followed by degradation.

It is found in the synapse. It catalyses the reaction L-seryl-[protein] + ATP = O-phospho-L-seryl-[protein] + ADP + H(+). The enzyme catalyses L-threonyl-[protein] + ATP = O-phospho-L-threonyl-[protein] + ADP + H(+). Its function is as follows. Component of a MAP kinase pathway that functions presynaptically to regulate synaptic architecture and presynaptic differentiation. Phosphorylates and activates mkk-4. The polypeptide is Mitogen-activated protein kinase kinase kinase dlk-1 (Caenorhabditis briggsae).